The primary structure comprises 239 residues: Cysteine-rich venom protein 2 (239 aa).

Residues 1–19 (MIALIVLPILAAVLQQSSG) form the signal peptide. The SCP domain maps to 38–166 (VDLHNSLRRS…EYSYFYVCQY (129 aa)). 7 cysteine pairs are disulfide-bonded: C75-C153, C92-C167, C148-C164, C186-C193, C189-C198, C202-C234, and C219-C232. Residues 198-234 (CTNPCPKKISTQLPRFGPQAGCQDKQMQSDCSATCFC) enclose the ShKT domain.

It belongs to the CRISP family. As to expression, expressed by the venom gland.

The protein resides in the secreted. In terms of biological role, weakly blocks contraction of smooth muscle elicited by high potassium-induced depolarization, but does not block caffeine-stimulated contraction. May target voltage-gated calcium channels on smooth muscle. This chain is Cysteine-rich venom protein 2, found in Sistrurus catenatus edwardsii (Desert massasauga).